The primary structure comprises 855 residues: Glucans biosynthesis glucosyltransferase H (855 aa).

6 helical membrane passes run I142 to L162, I196 to M216, V515 to L535, L572 to W592, T606 to F626, and F682 to I702.

Belongs to the glycosyltransferase 2 family. OpgH subfamily.

It is found in the cell inner membrane. The protein operates within glycan metabolism; osmoregulated periplasmic glucan (OPG) biosynthesis. Its function is as follows. Involved in the biosynthesis of osmoregulated periplasmic glucans (OPGs). This Pseudomonas entomophila (strain L48) protein is Glucans biosynthesis glucosyltransferase H.